The following is a 341-amino-acid chain: RNA 3'-terminal phosphate cyclase (341 aa).

Residues Gln102 and 283-287 (HLADQ) contribute to the ATP site. His308 acts as the Tele-AMP-histidine intermediate in catalysis.

The protein belongs to the RNA 3'-terminal cyclase family. Type 1 subfamily.

The protein localises to the cytoplasm. The enzyme catalyses a 3'-end 3'-phospho-ribonucleotide-RNA + ATP = a 3'-end 2',3'-cyclophospho-ribonucleotide-RNA + AMP + diphosphate. Its function is as follows. Catalyzes the conversion of 3'-phosphate to a 2',3'-cyclic phosphodiester at the end of RNA. The mechanism of action of the enzyme occurs in 3 steps: (A) adenylation of the enzyme by ATP; (B) transfer of adenylate to an RNA-N3'P to produce RNA-N3'PP5'A; (C) and attack of the adjacent 2'-hydroxyl on the 3'-phosphorus in the diester linkage to produce the cyclic end product. The biological role of this enzyme is unknown but it is likely to function in some aspects of cellular RNA processing. This chain is RNA 3'-terminal phosphate cyclase, found in Ectopseudomonas mendocina (strain ymp) (Pseudomonas mendocina).